The sequence spans 613 residues: Ribosome-associated molecular chaperone SSB1 (613 aa).

The segment at 1-391 is nucleotide binding domain (NBD); that stretch reads MAEGVFQGAI…ILTGQSTSED (391 aa). ATP contacts are provided by residues 16–18, Lys73, 205–207, 271–278, and Gly342; these read TTY, GGT, and ERAKRTLS. The interval 392–402 is inter-domain linker; it reads TKDLLLLDVAP. The segment at 403 to 613 is substrate binding domain (SBD); that stretch reads LSLGVGMQGD…RVVTKAMSSR (211 aa). The lid domain (SBDalpha) stretch occupies residues 516–612; the sequence is SDEIEKMVNQ…KRVVTKAMSS (97 aa). Positions 574-582 match the Nuclear export signal motif; it reads IESALSDAL.

The protein belongs to the heat shock protein 70 family. Ssb-type Hsp70 subfamily. In terms of assembly, binds to ribosomes. Binds close to the ribosomal tunnel exit via contacts with both ribosomal proteins and rRNA. Directly interacts with nascent polypeptides. This interaction is dependent on the ribosome-associated complex (RAC). Interacts with SSE1. Interacts with FES1.

The protein resides in the cytoplasm. The catalysed reaction is ATP + H2O = ADP + phosphate + H(+). In terms of biological role, ribosome-bound, Hsp70-type chaperone that assists in the cotranslational folding of newly synthesized proteins in the cytosol. Stimulates folding by interacting with nascent chains, binding to short, largely hydrophobic sequences exposed by unfolded proteins, thereby stabilizing longer, more slowly translated, and aggregation-prone nascent polypeptides and domains that cannot fold stably until fully synthesized. The Hsp70-protein substrate interaction depends on ATP-binding and on allosteric regulation between the NBD and the SBD. The ATP-bound state is characterized by a fast exchange rate of substrate (low affinity state), while in the ADP-bound state exchange is much slower (high affinity state). During the Hsp70 cycle, the chaperone switches between the ATP-bound state (open conformation) and the ADP-bound state (closed conformation) by major conformational rearrangements involving mainly the lid domain. Ssb cooperates with a specific Hsp40/Hsp70 co-chaperone termed the ribosome-associated complex (RAC), which stimulates the ATPase activity of the ribosome-associated pool of Ssbs and switches it to the high affinity substrate binding state. Hsp110 chaperone SSE1 and FES1 act as nucleotide exchange factors that cause substrate release. The protein is Ribosome-associated molecular chaperone SSB1 (SSB1) of Zygosaccharomyces rouxii (strain ATCC 2623 / CBS 732 / NBRC 1130 / NCYC 568 / NRRL Y-229).